An 80-amino-acid polypeptide reads, in one-letter code: Cell division protein ZapB (80 aa).

The stretch at 3–80 (FEVLEKLEAK…ALLGKMEDVE (78 aa)) forms a coiled coil.

It belongs to the ZapB family. Homodimer. The ends of the coiled-coil dimer bind to each other, forming polymers. Interacts with FtsZ.

The protein resides in the cytoplasm. Functionally, non-essential, abundant cell division factor that is required for proper Z-ring formation. It is recruited early to the divisome by direct interaction with FtsZ, stimulating Z-ring assembly and thereby promoting cell division earlier in the cell cycle. Its recruitment to the Z-ring requires functional FtsA or ZipA. The polypeptide is Cell division protein ZapB (Vibrio vulnificus (strain CMCP6)).